The primary structure comprises 313 residues: Olfactory receptor 1J1 (313 aa).

The Extracellular segment spans residues 1 to 25 (MRLKNHSSVSEFLLLGFPIRPEQGG). The N-linked (GlcNAc...) asparagine glycan is linked to N5. A helical membrane pass occupies residues 26–46 (IFFSLFLAMYLITVLGNLLII). The Cytoplasmic segment spans residues 47–57 (LLIRLDSHLHT). The chain crosses the membrane as a helical span at residues 58-78 (PMYFFLSHLAFTDISFSSVTV). Over 79–97 (PKMLTKVQNQPIPITYEEC) the chain is Extracellular. A disulfide bridge links C97 with C189. A helical membrane pass occupies residues 98-118 (VSQTYFFIFFADLDSFLITSM). The Cytoplasmic segment spans residues 119–142 (AYDRYMAICHPLHYITIMSQSRCA). The chain crosses the membrane as a helical span at residues 143 to 163 (MLVAVSWVIASACALLHSLLL). Residues 164-196 (DQLSFCADHTVPHFFCDLGALLKLSCSDTSLNQ) are Extracellular-facing. The helical transmembrane segment at 197 to 217 (LVIFTAGLAAIMLPFLCILIS) threads the bilayer. Topologically, residues 218 to 240 (YGRIGFTILQVPTTKGICKALST) are cytoplasmic. Residues 241-261 (CGSHLSVVALYYGSIIGLYFL) traverse the membrane as a helical segment. Residues 262–271 (PPSNSKINNN) lie on the Extracellular side of the membrane. A helical membrane pass occupies residues 272–292 (IVASVMYTVVTPMLNPFIYSL). At 293–313 (RNKDMKGALKKLLSKKTEFSK) the chain is on the cytoplasmic side.

This sequence belongs to the G-protein coupled receptor 1 family.

The protein localises to the cell membrane. Odorant receptor. The polypeptide is Olfactory receptor 1J1 (Mus musculus (Mouse)).